The primary structure comprises 531 residues: Peptide chain release factor 3 (531 aa).

Positions 10 to 278 constitute a tr-type G domain; sequence RRRRTFAIIS…SLIDWAPAPK (269 aa). Residues 19–26, 87–91, and 141–144 contribute to the GTP site; these read SHPDAGKT, DTPGH, and NKYD.

This sequence belongs to the TRAFAC class translation factor GTPase superfamily. Classic translation factor GTPase family. PrfC subfamily.

The protein resides in the cytoplasm. Its function is as follows. Increases the formation of ribosomal termination complexes and stimulates activities of RF-1 and RF-2. It binds guanine nucleotides and has strong preference for UGA stop codons. It may interact directly with the ribosome. The stimulation of RF-1 and RF-2 is significantly reduced by GTP and GDP, but not by GMP. The protein is Peptide chain release factor 3 of Neisseria meningitidis serogroup C / serotype 2a (strain ATCC 700532 / DSM 15464 / FAM18).